A 318-amino-acid polypeptide reads, in one-letter code: Malonyl-S-ACP:biotin-protein carboxyltransferase MADC (318 aa).

Positions 2–257 (AKWTELQDKS…VLQKPMEEIE (256 aa)) constitute a CoA carboxyltransferase N-terminal domain.

The protein resides in the cytoplasm. It carries out the reaction N(6)-biotinyl-L-lysyl-[protein] + malonyl-[ACP] = N(6)-carboxybiotinyl-L-lysyl-[protein] + acetyl-[ACP]. Its function is as follows. Gamma subunit of the biotin-dependent malonate decarboxylase multienzyme complex (EC 7.2.4.4). The two subunits MADC and MADD are required for the transfer of the malonate carboxy group from the acyl-carrier protein (ACP) to the prosthetic group of the biotin carrier MADF. Required for the regeneration of ACP. The sequence is that of Malonyl-S-ACP:biotin-protein carboxyltransferase MADC (madC) from Malonomonas rubra.